Here is a 574-residue protein sequence, read N- to C-terminus: Proline--tRNA ligase (574 aa).

This sequence belongs to the class-II aminoacyl-tRNA synthetase family. ProS type 1 subfamily. Homodimer.

Its subcellular location is the cytoplasm. It catalyses the reaction tRNA(Pro) + L-proline + ATP = L-prolyl-tRNA(Pro) + AMP + diphosphate. Functionally, catalyzes the attachment of proline to tRNA(Pro) in a two-step reaction: proline is first activated by ATP to form Pro-AMP and then transferred to the acceptor end of tRNA(Pro). As ProRS can inadvertently accommodate and process non-cognate amino acids such as alanine and cysteine, to avoid such errors it has two additional distinct editing activities against alanine. One activity is designated as 'pretransfer' editing and involves the tRNA(Pro)-independent hydrolysis of activated Ala-AMP. The other activity is designated 'posttransfer' editing and involves deacylation of mischarged Ala-tRNA(Pro). The misacylated Cys-tRNA(Pro) is not edited by ProRS. The protein is Proline--tRNA ligase of Ralstonia nicotianae (strain ATCC BAA-1114 / GMI1000) (Ralstonia solanacearum).